Reading from the N-terminus, the 443-residue chain is Squalene synthase (443 aa).

The next 2 membrane-spanning stretches (helical) occupy residues 291–311 (TSFNFCAIPQVMAIATLELVF) and 423–443 (ILLLSLGVAVFGVVYGVVRII).

This sequence belongs to the phytoene/squalene synthase family. Mg(2+) is required as a cofactor.

It localises to the endoplasmic reticulum membrane. The catalysed reaction is 2 (2E,6E)-farnesyl diphosphate + NADPH + H(+) = squalene + 2 diphosphate + NADP(+). The enzyme catalyses 2 (2E,6E)-farnesyl diphosphate + NADH + H(+) = squalene + 2 diphosphate + NAD(+). It participates in terpene metabolism; lanosterol biosynthesis; lanosterol from farnesyl diphosphate: step 1/3. Catalyzes the condensation of 2 two farnesyl pyrophosphate moieties to form squalene. It is the first committed enzyme of the sterol biosynthesis pathway. Required for the biosynthesis of ergosterol. This chain is Squalene synthase (ERG9), found in Cyberlindnera jadinii (Torula yeast).